The chain runs to 324 residues: DNA-directed RNA polymerase subunit alpha (324 aa).

The interval 1–228 (MIEFQKPTIR…EHFNLFTDLS (228 aa)) is alpha N-terminal domain (alpha-NTD). An alpha C-terminal domain (alpha-CTD) region spans residues 245-324 (RNKLLDMTIE…STPKEEEEEK (80 aa)).

Belongs to the RNA polymerase alpha chain family. Homodimer. The RNAP catalytic core consists of 2 alpha, 1 beta, 1 beta' and 1 omega subunit. When a sigma factor is associated with the core the holoenzyme is formed, which can initiate transcription.

The catalysed reaction is RNA(n) + a ribonucleoside 5'-triphosphate = RNA(n+1) + diphosphate. Functionally, DNA-dependent RNA polymerase catalyzes the transcription of DNA into RNA using the four ribonucleoside triphosphates as substrates. This is DNA-directed RNA polymerase subunit alpha from Caldicellulosiruptor bescii (strain ATCC BAA-1888 / DSM 6725 / KCTC 15123 / Z-1320) (Anaerocellum thermophilum).